Reading from the N-terminus, the 791-residue chain is Valine--tRNA ligase (791 aa).

The 'HIGH' region motif lies at Pro40–His50. The short motif at Lys521–Ser525 is the 'KMSKS' region element. Residue Lys524 participates in ATP binding.

It belongs to the class-I aminoacyl-tRNA synthetase family. ValS type 2 subfamily.

It is found in the cytoplasm. The enzyme catalyses tRNA(Val) + L-valine + ATP = L-valyl-tRNA(Val) + AMP + diphosphate. Its function is as follows. Catalyzes the attachment of valine to tRNA(Val). As ValRS can inadvertently accommodate and process structurally similar amino acids such as threonine, to avoid such errors, it has a 'posttransfer' editing activity that hydrolyzes mischarged Thr-tRNA(Val) in a tRNA-dependent manner. The polypeptide is Valine--tRNA ligase (Thermoplasma acidophilum (strain ATCC 25905 / DSM 1728 / JCM 9062 / NBRC 15155 / AMRC-C165)).